Consider the following 430-residue polypeptide: Trigger factor (430 aa).

The PPIase FKBP-type domain occupies 163–248 (GNIAIIDFKG…IKDIKVKELP (86 aa)).

It belongs to the FKBP-type PPIase family. Tig subfamily.

The protein localises to the cytoplasm. It catalyses the reaction [protein]-peptidylproline (omega=180) = [protein]-peptidylproline (omega=0). Functionally, involved in protein export. Acts as a chaperone by maintaining the newly synthesized protein in an open conformation. Functions as a peptidyl-prolyl cis-trans isomerase. The polypeptide is Trigger factor (Clostridium botulinum (strain ATCC 19397 / Type A)).